Consider the following 198-residue polypeptide: Probable molybdenum cofactor guanylyltransferase (198 aa).

GTP is bound by residues leucine 11–glycine 13, lysine 23, aspartate 71, and aspartate 102. Aspartate 102 contacts Mg(2+).

The protein belongs to the MobA family. The cofactor is Mg(2+).

It is found in the cytoplasm. It carries out the reaction Mo-molybdopterin + GTP + H(+) = Mo-molybdopterin guanine dinucleotide + diphosphate. Functionally, transfers a GMP moiety from GTP to Mo-molybdopterin (Mo-MPT) cofactor (Moco or molybdenum cofactor) to form Mo-molybdopterin guanine dinucleotide (Mo-MGD) cofactor. The sequence is that of Probable molybdenum cofactor guanylyltransferase from Halalkalibacterium halodurans (strain ATCC BAA-125 / DSM 18197 / FERM 7344 / JCM 9153 / C-125) (Bacillus halodurans).